A 770-amino-acid polypeptide reads, in one-letter code: MPYVGVGAQTVSTSLTGAPMVKAYIAIAASLIFVFCIAALGVHHSERKFNKFNKVSIDDIHKSDAGVIQDNIKTENIKKYLRIFTKDPHVAGTEANKKVAYEIANAWSEAGLEDVHTLPYEVLLSYPDFENPNSVIIKSSAGKEVFKSKGVSPVIIPDEQSGKYAGHQWLAYAGNGSASADVVYINHGTANDFKNLKLMGVDIKGKIALMRYGHGFRGDKIHKAQQAGAIGAILFSDTQDVAQDGVESENVYPKKIWMPNEGVQRGSLMHGDGDALSPYYPSKKELFKGRTIEEAKEDGVLPSIPVLPVSYTTGYEILKRLSGRPAPSDWQGFVGGNLTYKLGPGFVNGEKLSINVHSELRTKRIRNVIGYIRGSEEPDSYIMLGNHFDAWVYGSIDPNSGTAVLAEVARAMMQTINETSWKPARTIVFNAWDAEEFGLIGSTEFVEEFVNILQKRAVVYINMDCIQGNISLHVDTVPILEHAVIEASKQVENPSKRERSRGRKTLYDTWMKVFPDKKAGVPKIRVPGGGSDHAPFLNFAGVPVINFTFKNYTTWDTYPLYHTMYETPFSNIHLLDTDNLSVHKAIGQYWAELAKTFADDVILPMNTTHFASVMLKTYLPQLKTTISGINVSRSDFEDIRTQYALLSKSAQDLLTMSKKFQETIHFTQHSFSQNPYDPKHVNAVNERLKSTERCFINPRGVSMHNPSARHVLFSVSDSDSYSSSLMAGVQNAINSYDLNPTKKGLREIINQISIVQYSVICVVNTLRDVI.

Residues 1-25 (MPYVGVGAQTVSTSLTGAPMVKAYI) are Cytoplasmic-facing. A helical; Signal-anchor for type II membrane protein transmembrane segment spans residues 26 to 42 (AIAASLIFVFCIAALGV). Residues 43–770 (HHSERKFNKF…CVVNTLRDVI (728 aa)) are Extracellular-facing. Asn175 and Asn337 each carry an N-linked (GlcNAc...) asparagine glycan. A catalytic region spans residues 282 to 597 (SKKELFKGRT…QYWAELAKTF (316 aa)). Residues His387 and Asp397 each contribute to the Zn(2+) site. The N-linked (GlcNAc...) asparagine glycan is linked to Asn417. Glu435 acts as the Nucleophile in catalysis. Zn(2+)-binding residues include Glu436 and Asp464. 3 N-linked (GlcNAc...) asparagine glycosylation sites follow: Asn469, Asn546, and Asn551. His562 lines the Zn(2+) pocket. Asn579, Asn606, and Asn630 each carry an N-linked (GlcNAc...) asparagine glycan.

The protein belongs to the peptidase M28 family. M28B subfamily. It depends on Zn(2+) as a cofactor.

It localises to the membrane. It carries out the reaction Release of an unsubstituted, C-terminal glutamyl residue, typically from Ac-Asp-Glu or folylpoly-gamma-glutamates.. This chain is Glutamate carboxypeptidase 2 homolog, found in Caenorhabditis elegans.